A 195-amino-acid chain; its full sequence is Myelin-associated neurite-outgrowth inhibitor (195 aa).

Residue M1 is modified to N-acetylmethionine. Over 1 to 18 the chain is Cytoplasmic; that stretch reads MNPVYSPGSSGVPYANAK. S6 bears the Phosphoserine mark. A helical transmembrane segment spans residues 19 to 42; sequence GIGYPAGFPMGYAAAAPAYSPNMY. Over 43 to 142 the chain is Extracellular; that stretch reads PGANPTFQAG…PAPLPPPRGN (100 aa). N46 is a glycosylation site (N-linked (GlcNAc...) asparagine). Residues 143–164 traverse the membrane as a helical segment; sequence GVTMGMVAGTTMAMSAGTLLTA. Topologically, residues 165–195 are cytoplasmic; it reads HSPTPVAPHPVTVPTYRAPGTPTYSYVPPQW.

It belongs to the FAM168 family. May form homodimers. May interact with DAZAP2, FAM168A, PRDX6, RBM6, TMTC1 and YPEL2. Interacts with CDC27. Post-translationally, N-glycosylated.

It localises to the cytoplasm. It is found in the perinuclear region. The protein resides in the cell membrane. The protein localises to the cell projection. Its subcellular location is the axon. In terms of biological role, inhibitor of neuronal axonal outgrowth. Acts as a negative regulator of CDC42 and STAT3 and a positive regulator of STMN2. Positive regulator of CDC27. The protein is Myelin-associated neurite-outgrowth inhibitor (FAM168B) of Bos taurus (Bovine).